The chain runs to 50 residues: Small ribosomal subunit protein uS14 (50 aa).

Residues cysteine 15, cysteine 18, cysteine 33, and cysteine 36 each contribute to the Zn(2+) site.

It belongs to the universal ribosomal protein uS14 family. Zinc-binding uS14 subfamily. As to quaternary structure, part of the 30S ribosomal subunit. Zn(2+) is required as a cofactor.

Its function is as follows. Binds 16S rRNA, required for the assembly of 30S particles. The protein is Small ribosomal subunit protein uS14 of Methanosarcina acetivorans (strain ATCC 35395 / DSM 2834 / JCM 12185 / C2A).